A 262-amino-acid chain; its full sequence is 3-methyl-2-oxobutanoate hydroxymethyltransferase (262 aa).

Mg(2+)-binding residues include D42 and D81. 3-methyl-2-oxobutanoate-binding positions include 42–43 (DS), D81, and K110. Residue E112 participates in Mg(2+) binding. E180 functions as the Proton acceptor in the catalytic mechanism.

The protein belongs to the PanB family. As to quaternary structure, homodecamer; pentamer of dimers. The cofactor is Mg(2+).

The protein resides in the cytoplasm. The catalysed reaction is 3-methyl-2-oxobutanoate + (6R)-5,10-methylene-5,6,7,8-tetrahydrofolate + H2O = 2-dehydropantoate + (6S)-5,6,7,8-tetrahydrofolate. The protein operates within cofactor biosynthesis; (R)-pantothenate biosynthesis; (R)-pantoate from 3-methyl-2-oxobutanoate: step 1/2. Catalyzes the reversible reaction in which hydroxymethyl group from 5,10-methylenetetrahydrofolate is transferred onto alpha-ketoisovalerate to form ketopantoate. This is 3-methyl-2-oxobutanoate hydroxymethyltransferase from Legionella pneumophila (strain Paris).